We begin with the raw amino-acid sequence, 371 residues long: Enoyl-[acyl-carrier-protein] reductase [NADH] 2, chloroplastic (371 aa).

The transit peptide at 1–67 directs the protein to the chloroplast; the sequence is MGASVTTGLQ…SLNHKRFAVR (67 aa). NAD(+)-binding positions include Gly-87, Tyr-94, 151–152, 198–199, and Leu-248; these read DA and SL. Catalysis depends on proton acceptor residues Tyr-250 and Tyr-260. NAD(+)-binding positions include Lys-268 and 298–302; that span reads LGSRA.

The protein belongs to the short-chain dehydrogenases/reductases (SDR) family. FabI subfamily. Homotetramer.

Its subcellular location is the plastid. It is found in the chloroplast. The enzyme catalyses a 2,3-saturated acyl-[ACP] + NAD(+) = a (2E)-enoyl-[ACP] + NADH + H(+). The protein operates within lipid metabolism; fatty acid biosynthesis. Catalyzes the NAD-dependent reduction of a carbon-carbon double bond in an enoyl moiety that is covalently linked to an acyl carrier protein (ACP). Catalyzes the last reduction step in the de novo synthesis cycle of fatty acids. Involved in the elongation cycle of fatty acids which are used in lipid metabolism. Required for normal plant growth. In Oryza sativa subsp. japonica (Rice), this protein is Enoyl-[acyl-carrier-protein] reductase [NADH] 2, chloroplastic.